Here is a 354-residue protein sequence, read N- to C-terminus: GTPase Obg (354 aa).

The Obg domain maps to 1–159 (MKFVDEVKIH…RDLVLELKLL (159 aa)). The 174-residue stretch at 160–333 (ADVGIVGYPN…LLDAVGRALF (174 aa)) folds into the OBG-type G domain. GTP is bound by residues 166-173 (GYPNAGKS), 191-195 (FTTLT), 212-215 (DIPG), 283-286 (TKID), and 314-316 (SAV). Mg(2+) contacts are provided by Ser173 and Thr193.

This sequence belongs to the TRAFAC class OBG-HflX-like GTPase superfamily. OBG GTPase family. Monomer. Mg(2+) is required as a cofactor.

Its subcellular location is the cytoplasm. Its function is as follows. An essential GTPase which binds GTP, GDP and possibly (p)ppGpp with moderate affinity, with high nucleotide exchange rates and a fairly low GTP hydrolysis rate. Plays a role in control of the cell cycle, stress response, ribosome biogenesis and in those bacteria that undergo differentiation, in morphogenesis control. The sequence is that of GTPase Obg from Anaeromyxobacter dehalogenans (strain 2CP-1 / ATCC BAA-258).